The following is a 125-amino-acid chain: Small ribosomal subunit protein uS12 (125 aa).

Asp-89 is modified (3-methylthioaspartic acid). A disordered region spans residues 105–125; that stretch reads QGVKDRKQSRSKYGAKKPKAK. The segment covering 113–125 has biased composition (basic residues); sequence SRSKYGAKKPKAK.

It belongs to the universal ribosomal protein uS12 family. As to quaternary structure, part of the 30S ribosomal subunit. Contacts proteins S8 and S17. May interact with IF1 in the 30S initiation complex.

Its function is as follows. With S4 and S5 plays an important role in translational accuracy. Interacts with and stabilizes bases of the 16S rRNA that are involved in tRNA selection in the A site and with the mRNA backbone. Located at the interface of the 30S and 50S subunits, it traverses the body of the 30S subunit contacting proteins on the other side and probably holding the rRNA structure together. The combined cluster of proteins S8, S12 and S17 appears to hold together the shoulder and platform of the 30S subunit. The chain is Small ribosomal subunit protein uS12 from Delftia acidovorans (strain DSM 14801 / SPH-1).